A 282-amino-acid chain; its full sequence is 2,3,4,5-tetrahydropyridine-2,6-dicarboxylate N-succinyltransferase (282 aa).

Residues arginine 109 and aspartate 146 each contribute to the substrate site.

It belongs to the transferase hexapeptide repeat family. Homotrimer.

The protein resides in the cytoplasm. The catalysed reaction is (S)-2,3,4,5-tetrahydrodipicolinate + succinyl-CoA + H2O = (S)-2-succinylamino-6-oxoheptanedioate + CoA. The protein operates within amino-acid biosynthesis; L-lysine biosynthesis via DAP pathway; LL-2,6-diaminopimelate from (S)-tetrahydrodipicolinate (succinylase route): step 1/3. This Bartonella quintana (strain Toulouse) (Rochalimaea quintana) protein is 2,3,4,5-tetrahydropyridine-2,6-dicarboxylate N-succinyltransferase.